Here is a 514-residue protein sequence, read N- to C-terminus: JmjC domain-containing histone demethylation protein 1 (514 aa).

The PHD-type zinc finger occupies 4–62 (IDTCPICVESPLEDSTTFNNIAWLQCDICNQWFHASCLKIPKIEVNNLHSYHCEGCSKS). Positions 220–384 (SDVDSFGKSF…MHLRIYEIEK (165 aa)) constitute a JmjC domain. T267 is a substrate binding site. 2 residues coordinate Fe cation: H270 and D272. K287 lines the substrate pocket. Residue H352 coordinates Fe cation. Basic and acidic residues predominate over residues 432–454 (KSEAHSRGEVHTKTETHAVKDEP). A disordered region spans residues 432 to 456 (KSEAHSRGEVHTKTETHAVKDEPQP).

The protein belongs to the JHDM1 histone demethylase family. It depends on Fe(2+) as a cofactor.

The protein localises to the nucleus. The catalysed reaction is N(6),N(6)-dimethyl-L-lysyl(36)-[histone H3] + 2 2-oxoglutarate + 2 O2 = L-lysyl(36)-[histone H3] + 2 formaldehyde + 2 succinate + 2 CO2. Its function is as follows. Histone demethylase that specifically demethylates 'Lys-36' of histone H3, thereby playing a central role in histone code. The polypeptide is JmjC domain-containing histone demethylation protein 1 (JHD1) (Debaryomyces hansenii (strain ATCC 36239 / CBS 767 / BCRC 21394 / JCM 1990 / NBRC 0083 / IGC 2968) (Yeast)).